We begin with the raw amino-acid sequence, 785 residues long: 1-phosphatidylinositol 4,5-bisphosphate phosphodiesterase delta-3 (785 aa).

The interval 1–43 (MLCGGWKRSRRSPEESRVSAQVAAPLAFPPSPASSDSSTKRPG) is disordered. Residues 65 to 168 (SRLLKIRSRT…WVRGLAKLRA (104 aa)) form the PH domain. Residues 69–97 (KIRSRTWHKERLYRLQEDGLSVWFQRRIP) form a substrate binding region. Serine 101 carries the post-translational modification Phosphoserine. EF-hand domains lie at 178–213 (RLDH…VNVD), 214–249 (MNDM…LLKR), and 246–281 (LLKR…QGED). Residues aspartate 191, aspartate 193, aspartate 195, lysine 197, glutamate 202, aspartate 227, serine 229, asparagine 231, arginine 233, and glutamate 238 each coordinate Ca(2+). The PI-PLC X-box domain maps to 333 to 478 (QDMGQPLAHY…LKGRILVKGK (146 aa)). Histidine 348 is an active-site residue. The Ca(2+) site is built by asparagine 349, glutamate 378, and aspartate 380. Histidine 393 is a catalytic residue. Glutamate 427 contacts Ca(2+). The substrate site is built by lysine 476 and lysine 478. Over residues 484-493 (RSEDGRILSD) the composition is skewed to basic and acidic residues. Residues 484 to 517 (RSEDGRILSDREEEEEEEEEAEEALEAAEQRSRA) form a disordered region. Serine 492 carries the post-translational modification Phosphoserine. Residues 494–509 (REEEEEEEEEAEEALE) are compositionally biased toward acidic residues. Residues 524 to 640 (LSALAVYCCA…GYVLKPAYLR (117 aa)) form the PI-PLC Y-box domain. A substrate-binding site is contributed by serine 553. Serine 569 bears the Phosphoserine mark. Arginine 580 provides a ligand contact to substrate. The 130-residue stretch at 636–765 (PAYLRQLNTT…QGYRHIHLLS (130 aa)) folds into the C2 domain. Residues isoleucine 679, aspartate 681, asparagine 705, aspartate 734, tyrosine 735, and aspartate 736 each coordinate Ca(2+).

Ca(2+) serves as cofactor. Expressed in cerebellum and cerebral cortex.

The protein resides in the membrane. The protein localises to the cytoplasm. It is found in the cleavage furrow. It carries out the reaction a 1,2-diacyl-sn-glycero-3-phospho-(1D-myo-inositol-4,5-bisphosphate) + H2O = 1D-myo-inositol 1,4,5-trisphosphate + a 1,2-diacyl-sn-glycerol + H(+). Strongly activated by phosphatidic acid. Inhibited by phosphatidylethanolamine (PtdEtn), phosphatidylcholine (PtdCho), sphingomyelin and phosphatidylserine (PtdSer). Functionally, hydrolyzes the phosphatidylinositol 4,5-bisphosphate (PIP2) to generate 2 second messenger molecules diacylglycerol (DAG) and inositol 1,4,5-trisphosphate (IP3). DAG mediates the activation of protein kinase C (PKC), while IP3 releases Ca(2+) from intracellular stores. Essential for trophoblast and placental development. May participate in cytokinesis by hydrolyzing PIP2 at the cleavage furrow. Regulates neurite outgrowth through the inhibition of RhoA/Rho kinase signaling. In Mus musculus (Mouse), this protein is 1-phosphatidylinositol 4,5-bisphosphate phosphodiesterase delta-3.